The primary structure comprises 213 residues: Outer-membrane lipoprotein carrier protein (213 aa).

A signal peptide spans 1–23 (MKKLLKQSLLGFALVSMTGAAFA).

Belongs to the LolA family. Monomer.

It is found in the periplasm. Functionally, participates in the translocation of lipoproteins from the inner membrane to the outer membrane. Only forms a complex with a lipoprotein if the residue after the N-terminal Cys is not an aspartate (The Asp acts as a targeting signal to indicate that the lipoprotein should stay in the inner membrane). The chain is Outer-membrane lipoprotein carrier protein from Actinobacillus pleuropneumoniae serotype 7 (strain AP76).